The primary structure comprises 340 residues: Mitochondrial distribution and morphology protein 12 (340 aa).

Residues 1-321 (MSIDLDWDGM…WPSWIKVSME (321 aa)) form the SMP-LTD domain. 3 disordered regions span residues 79 to 107 (HYLP…TNPI), 161 to 184 (SVRE…EDRE), and 319 to 340 (SMED…EDEH). Positions 89-106 (QRRSAPSTPHIHTNTTNP) are enriched in polar residues. Acidic residues predominate over residues 321–340 (EDEDSDDEEGEEEGDQEDEH).

It belongs to the MDM12 family. Component of the ER-mitochondria encounter structure (ERMES) or MDM complex, composed of MMM1, MDM10, MDM12 and MDM34. An MMM1 homodimer associates with one molecule of MDM12 on each side in a pairwise head-to-tail manner, and the SMP-LTD domains of MMM1 and MDM12 generate a continuous hydrophobic tunnel for phospholipid trafficking.

The protein localises to the mitochondrion outer membrane. The protein resides in the endoplasmic reticulum membrane. In terms of biological role, component of the ERMES/MDM complex, which serves as a molecular tether to connect the endoplasmic reticulum (ER) and mitochondria. Components of this complex are involved in the control of mitochondrial shape and protein biogenesis, and function in nonvesicular lipid trafficking between the ER and mitochondria. MDM12 is required for the interaction of the ER-resident membrane protein MMM1 and the outer mitochondrial membrane-resident beta-barrel protein MDM10. The MDM12-MMM1 subcomplex functions in the major beta-barrel assembly pathway that is responsible for biogenesis of all mitochondrial outer membrane beta-barrel proteins, and acts in a late step after the SAM complex. The MDM10-MDM12-MMM1 subcomplex further acts in the TOM40-specific pathway after the action of the MDM12-MMM1 complex. Essential for establishing and maintaining the structure of mitochondria and maintenance of mtDNA nucleoids. The sequence is that of Mitochondrial distribution and morphology protein 12 from Yarrowia lipolytica (strain CLIB 122 / E 150) (Yeast).